The sequence spans 426 residues: Probable serine/threonine-protein kinase PBL3 (426 aa).

The tract at residues 1-42 (MGNCLDSSAKVDSSSHSPHANSASLSSRVSSKTSRSTVPSSL) is disordered. Residue G2 is the site of N-myristoyl glycine attachment. The S-palmitoyl cysteine moiety is linked to residue C4. Residues 7-42 (SSAKVDSSSHSPHANSASLSSRVSSKTSRSTVPSSL) are compositionally biased toward low complexity. T72 carries the post-translational modification Phosphothreonine. Residues 83-366 (FRPDSLLGEG…SEVLAKLDQL (284 aa)) form the Protein kinase domain. ATP contacts are provided by residues 89–97 (LGEGGFGYV) and K121. Y166 carries the post-translational modification Phosphotyrosine. Residue D216 is the Proton acceptor of the active site. The residue at position 250 (S250) is a Phosphoserine. Residues T251 and T256 each carry the phosphothreonine modification. A Phosphotyrosine modification is found at Y264. Residues 367 to 394 (ESTKPGTGVGNRQAQIDSPRGSNGSIVQ) show a composition bias toward polar residues. The disordered stretch occupies residues 367–426 (ESTKPGTGVGNRQAQIDSPRGSNGSIVQKSPRRYSYDRPLLHITPGASPLPTHNHSPRVR).

The protein belongs to the protein kinase superfamily. Ser/Thr protein kinase family. In terms of assembly, interacts with the Xanthomonas campestris effector XopAC/AvrAC. As to expression, strongly expressed in leaves, moderately in flowers, and barely in roots.

The protein localises to the cell membrane. Its subcellular location is the nucleus. It carries out the reaction L-seryl-[protein] + ATP = O-phospho-L-seryl-[protein] + ADP + H(+). The catalysed reaction is L-threonyl-[protein] + ATP = O-phospho-L-threonyl-[protein] + ADP + H(+). In terms of biological role, may be involved in plant defense signaling. This Arabidopsis thaliana (Mouse-ear cress) protein is Probable serine/threonine-protein kinase PBL3.